The following is a 481-amino-acid chain: Neuronal acetylcholine receptor subunit eat-2 (481 aa).

An N-terminal signal peptide occupies residues 1–19 (MFLLLQILYILLFLNLADT). Residues 20–235 (SDDEYRLLKD…MHLKRRTMYY (216 aa)) lie on the Extracellular side of the membrane. A glycan (N-linked (GlcNAc...) asparagine) is linked at N93. Cysteines 147 and 161 form a disulfide. 3 helical membrane-spanning segments follow: residues 236 to 256 (GLNW…GFTM), 264 to 284 (VTLQ…VSEV), and 292 to 312 (IPII…SICV). The Cytoplasmic segment spans residues 313–443 (SLITVNIFYR…WRFMAMVIDR (131 aa)). Residues 356–384 (KPKREKKKEEEEDEESNAGGKEEESELIS) form a disordered region. Residues 444-464 (ASLFLFTGLIFGTTFVIFAAC) form a helical membrane-spanning segment.

The protein belongs to the ligand-gated ion channel (TC 1.A.9) family. Acetylcholine receptor (TC 1.A.9.1) subfamily. As to quaternary structure, neuronal AChR seems to be composed of two different type of subunits: alpha and beta.

It localises to the postsynaptic cell membrane. The protein localises to the cell membrane. After binding acetylcholine, the AChR responds by an extensive change in conformation that affects all subunits and leads to opening of an ion-conducting channel across the plasma membrane. Nicotinic acetylcholine receptor in the MC pharyngeal motor neuron involved in pharyngeal pumping. Has a role in the determination of life span possibly via calorific restriction which affects growth rate, although this is independent of metabolic activity. In Caenorhabditis briggsae, this protein is Neuronal acetylcholine receptor subunit eat-2.